The following is a 428-amino-acid chain: Dihydroorotase (428 aa).

Zn(2+) contacts are provided by H59 and H61. Residues 61–63 (HLR) and N93 each bind substrate. D151, H178, and H231 together coordinate Zn(2+). N277 provides a ligand contact to substrate. Zn(2+) is bound at residue D304. D304 is a catalytic residue. Substrate-binding positions include H308 and 322–323 (FG).

This sequence belongs to the metallo-dependent hydrolases superfamily. DHOase family. Class I DHOase subfamily. Requires Zn(2+) as cofactor.

It carries out the reaction (S)-dihydroorotate + H2O = N-carbamoyl-L-aspartate + H(+). It functions in the pathway pyrimidine metabolism; UMP biosynthesis via de novo pathway; (S)-dihydroorotate from bicarbonate: step 3/3. Functionally, catalyzes the reversible cyclization of carbamoyl aspartate to dihydroorotate. This is Dihydroorotase from Bacillus cereus (strain ATCC 14579 / DSM 31 / CCUG 7414 / JCM 2152 / NBRC 15305 / NCIMB 9373 / NCTC 2599 / NRRL B-3711).